Consider the following 262-residue polypeptide: MQTIICVEQLSKTFNQHQALHAVDLNIHHGEMVALLGPSGSGKSTLLRHLSGLITGDKSAGSHIELLGRTVQREGRLARDIRKSRANTGYIFQQFNLVNRLSVLENVLIGALGSTPFWRTCFSWFTREQKQRALQALTRVGMAHFAYQRVSTLSGGQQQRVAIARALMQQAKVILADEPIASLDPESARIVMDTLRDINQNDGITVVVTLHQVDYALRYCERIVALRQGHVFYDGSSQQFDNERFDHLYRSINRVEENAKAA.

In terms of domain architecture, ABC transporter spans 5–253; that stretch reads ICVEQLSKTF…RFDHLYRSIN (249 aa). 37-44 contacts ATP; it reads GPSGSGKS.

The protein belongs to the ABC transporter superfamily. Phosphonates importer (TC 3.A.1.9.1) family. As to quaternary structure, the complex is composed of two ATP-binding proteins (PhnC), two transmembrane proteins (PhnE) and a solute-binding protein (PhnD).

It localises to the cell inner membrane. The enzyme catalyses phosphonate(out) + ATP + H2O = phosphonate(in) + ADP + phosphate + H(+). Part of the ABC transporter complex PhnCDE involved in phosphonates import. Responsible for energy coupling to the transport system. The polypeptide is Phosphonates import ATP-binding protein PhnC (Escherichia coli O157:H7).